We begin with the raw amino-acid sequence, 577 residues long: Glucose-6-phosphate 1-dehydrogenase, chloroplastic (577 aa).

A disordered region spans residues 1–20 (MGVQLRLNPCSSSSAATSPS). Residues 1–63 (MGVQLRLNPC…QPRKHFEVFS (63 aa)) constitute a chloroplast transit peptide. Positions 11 to 20 (SSSSAATSPS) are enriched in low complexity. NADP(+) contacts are provided by residues 97 to 104 (GASGDLAK) and Arg-131. Cysteines 149 and 157 form a disulfide. Residue Lys-234 coordinates NADP(+). D-glucose 6-phosphate is bound by residues Lys-234, 264 to 268 (HYLGK), Glu-302, and Asp-321. His-326 (proton acceptor) is an active-site residue. Position 419 (Lys-419) interacts with NADP(+). Positions 422 and 427 each coordinate D-glucose 6-phosphate. Residues Arg-428, Arg-432, and Arg-461 each contribute to the NADP(+) site. Residue Gln-463 coordinates D-glucose 6-phosphate. NADP(+) is bound by residues 469-471 (YLK) and Arg-554.

The protein belongs to the glucose-6-phosphate dehydrogenase family. As to quaternary structure, homodimer. In terms of tissue distribution, green tissues, leaves and chloroplasts.

Its subcellular location is the plastid. It localises to the chloroplast. It catalyses the reaction D-glucose 6-phosphate + NADP(+) = 6-phospho-D-glucono-1,5-lactone + NADPH + H(+). The protein operates within carbohydrate degradation; pentose phosphate pathway; D-ribulose 5-phosphate from D-glucose 6-phosphate (oxidative stage): step 1/3. Its activity is regulated as follows. Regulated by metabolites. Post-translationally inactivated by cysteine-mediated redox modification via the ferredoxin-thioredoxin system in the light and this avoids futile cycles with photosynthetic CO2 fixation. Its function is as follows. Catalyzes the rate-limiting step of the oxidative pentose-phosphate pathway, which represents a route for the dissimilation of carbohydrates besides glycolysis. The main function of this enzyme is to provide reducing power (NADPH) and pentose phosphates for fatty acid and nucleic acid synthesis which are involved in membrane synthesis and cell division. This chain is Glucose-6-phosphate 1-dehydrogenase, chloroplastic, found in Solanum tuberosum (Potato).